The sequence spans 226 residues: Glutathione S-transferase kappa 1 (226 aa).

16 to 18 is a binding site for glutathione; the sequence is SPY. N6-succinyllysine is present on residues Lys-36 and Lys-49. Residue Asn-53 participates in glutathione binding. An N6-acetyllysine; alternate mark is found at Lys-68 and Lys-74. N6-succinyllysine; alternate is present on residues Lys-68 and Lys-74. Lys-85 is subject to N6-acetyllysine. Residues Lys-93 and Lys-116 each carry the N6-acetyllysine; alternate modification. Residues Lys-93 and Lys-116 each carry the N6-succinyllysine; alternate modification. At Lys-144 the chain carries N6-succinyllysine. At Lys-158 the chain carries N6-acetyllysine; alternate. Lys-158 bears the N6-succinyllysine; alternate mark. N6-acetyllysine is present on Lys-165. 2 positions are modified to N6-acetyllysine; alternate: Lys-167 and Lys-177. Lys-167 and Lys-177 each carry N6-succinyllysine; alternate. Residue Leu-183 coordinates glutathione. Lys-193 carries the post-translational modification N6-succinyllysine. 200–201 serves as a coordination point for glutathione; the sequence is SD.

It belongs to the GST superfamily. Kappa family. In terms of assembly, homodimer.

It localises to the mitochondrion matrix. The enzyme catalyses RX + glutathione = an S-substituted glutathione + a halide anion + H(+). In terms of biological role, glutathione S-transferase that catalyzes the conjugation of glutathione to exogenous and endogenous compounds. The polypeptide is Glutathione S-transferase kappa 1 (Gstk1) (Rattus norvegicus (Rat)).